Consider the following 3933-residue polypeptide: MSNSFDNFDFSVHEVKKQELESILLQQEQEKQAKEEKESIKDTDDKPIEDTEHSTNNDKPIEPVESVESTPTTTTTTKPTDEASSSSNNNNNKIDVTIEKKEGDITGIELEELLSKIPSTYQLSTINKTIQGFSTDIREPTDKPFENTSNIETTRQLKFPPPLVPPKTEAERLEQEQKQKQYDENRKETDRKLELELERLKNKKEEVEQIRAYFQPGDQKPIDYVIELTFNIFPSDIVDKETNKLLWCPEVSPRNPGFARDKPTNGWTFDQFQRTLTYTPIESWKKSTLYTITIPAEIKVSPTNIITTQGQQFEFTTETLKIELFMPASIREYSHNQTIFIGFNQKVSPQELLPFIQATNLRSAPAHVAKGTPNVLQFIHEEIMKQDPILKDLVTGYEGRNIGIKPTFGFNSSSTVIISVLQGAPSLEGTVKKLLTEQKDFRTLQSFKPNITTAPYSPHIDLVISFGNLNSLANPSEITWRPKVTPSFPDGDWVLSANSLVYKLSDNSNWPSSTSYTVFFENGPKSTSGEQMEEIELKFQTASINLTGAFGYDGINFESLNINSKSASTSNTFSNNVILIFRYNQIVNEESFKKIFSFKVDQLLSKAVEYQIISNAAEFHSITTFRKAIKENYLRFIDTQEPGSWFAIKPLKPLGDDLGYSIEFDGSLQSMEGPLPTKLDGGYNNYFFATYPQLTCTTDLVHDSFKVSFNQPIVNNSYDYNNYVLTPDAFISSRTDVQIELDYLPVGPSVLPLIQPPIEGTWSALTRNILSFKAASFDLIKPATTYTILPQPNSQFTTPWGKVFDKAIFGEVTTTLPNVNFRYPTLSSIKANQLFCLSFNQPVDPESVIANVRLQPDTFLSAKKFEVQLVTKISLEEFEDIDYSFKNAKLDGRLVFFRSVKPLPIGSIKFSVLPGVRSLEGPLISKDETYFGTLVVEKFSIIGTSPVDGAIIHSPYFFFINFNKPLKSKDALVYIDLTENHGPEETLTTIVDKITAIASVSASIASSDSSSSNQLIENQNNITTTTTTTTTNNNNNNNEVGESTTPNLPITTTTTNKNKEIDWDQFITIKPKPEKSTAKWTYEIIGKIYRLKIEDFSIWNASTNYQIIVDKSIESKYGETMEKDTVFDFYTPYNGIESVHPSPGFIVNTDKSDIFAIHFHQRINPVEILKVLKVEGVDSFNKKIKNIVLSNVDREQVPSEYLSQMSTSFSDPLNYIMFVRMSTVVPNSSLTLTVGPNIPSAEGPELNPNKLTYTFKISDHLHINSTTYYASDRTLQILFKQPLNLTGPALQKKIPLPESWIPTITPEISSEIQRTWTAQLNTSNTLQNGYSMICCKFETSLPFSTKFTFKLPDCIESETGEFYQQGIDSEDKYEFKTSTLQLVTSVPMNGHQTALLSRPVLICFNQKVDVVELLKYLTISQVSTSEKKKTKFTLEESSDFTHIEKSVGYEQDHWISLRTNPPLIPNSSYSITLKEGAPSLEGPLLTKEAINIFFTTNCTRVYASINSDQAHISFSEPLIHLPINGSSGGSSSSSLPSSEPIIPTITIKPDPGVPLTWKAGAGETIICNEKVSTWKQSTEYKFSFPEDLVSSKGYVMDQSTLDNLTIKTSVNSIIDKSGYPTLTDSIHFIRFSQNIDPKKQISKMKIFSKSGLFNSKTNHEVRLATKDEIDEKVIFSEHLDHNINYSRLKLFIGDVYDPADPTDLLIYKFVKPLPPNTQIQYEFEEFTSTQGQLTWVKPFYNYSIKSLPPLSIIDSESSFGKKTPFYFGDTLVIKFNNTLSTSTFQANMIRVEPDIPYSITLDDQSIFLKDFKYDQFQNTDIEFKIILNTNQIMDSTGQHIDISTIVGTGGIFNKNDSTLTYRLKVVPRNFQSTFKLPFLSSSSTNGIVTFDNSDLNSKPAICLRSKNINQYVIQLYKLNPYIDYPQFLDEEVDTKTLQKFTSLKSVPAVDQPILKSGELVHCRMVDIEIPSHEVDIEIDTYIDLFEGLTNKELMIGHIGVVLYPTQNALYPNVGKNTVTPLRRCWVQCTRLNIGAVTDQKILSCWSNSTVDGSVVPNVKISSLSTVNYTQFRMKEQKKSNNLIALQKHVGNLVDGVTNEHGLLHLPLQNNYSEIHIVAENPINKDVCLLPKVFVQPNSTFKAISWYVFDDQSLYRPKTTVQIKGYLRFLFRDQFEHKLSVYNFQSTLVIKYILEDGAGLTVLKGETKLNSFSAFNFSLDLPDTINLGKTTLKLSLADENDFHLLNEQNQKIRIKSDTGKTLRTSFIHSFDVQEFKRPEFVASASFLYNETNGFTGSSYIQVKSNYFEGASLPDCETSWKVSSCKANFVPPKMSKYQFGYVENDKLLKLVDHSIKREKTITGKTDDDGLHTVKTTFNGKAPNPPSSVYIDTSVDISDINQQTTTSTVRYILHPTHNFVGIKPSFNNDKPLIIHDGNKNTPLKLMMIVCDENGIPQPDIGISITISPISGYHQFDIPLINENHQSTIVSTDTEFQHSFILSEPNYKPKENILYNISATIYEKPDNKFTTTIPLLINWSLSEYKSNDLLDSSTIGKTTTTTTTTTTTTSNNNETKQPIKLEEFKFKEIKNVNISLDKKSYISGEKCLVSIDYFEMPYQCVLSIINNGVVFTKAYEITNGKDRVEFDIQEEWAPLCSVLCDVRNVGDHYLQGTTKLSITPTTKQLTITVKPEEEIVEPGADTNINVHVTDSTGANVANAEVCLLVIDESIIALSQHNVENPLNIFYPNSSSEHAKSMLSSYFHGLSSASVLLQPKLKQGTAIIAGTQQPIIKPDTYNHILEKKILINSNDNDNFNYSSYNNNNNNNNRYNTPVRNGNIGRPTRRGSGTDKVLLDILDTAGQEEYSAMRDQYYRHGDAFILAYSINSRSSFQNLQSYYNQLCRIKDCDSYACVIVIGTKADLEDQRQVSKEDGLLYARSLGAAFIETSAKTGFNVHTAFAIVSKLSAGYTGTAENKIVIVGDGGIGKSALTVRYVQSCFVEQYDPTIEDSYRKQVSLDDDPSLDGFIPDSLRADMEGNSTLQSASLMKKRSKKSSFGGFGGSGSSSSRKYKEKSPSSSSTRTSVSTSLSSRSETLGEVGLLDFGGSDKKLSRKSSLVEEESKRQYDDDDESKSESSEYDDDDDQDYEKDGLFETELSSLSMMRKDFNALANFTPSVFTNEVGKITIPIHLPDNLTRYRIWGVVCSKDEQKFGKGESLITSKVLVSTRCVPPRFLNINDSCTIGIVVSNNSNNNRMVKIGVKCSEHLTILNSNGTSTFGHFSFVEQKKRKIIYINVKTLNTGVGSIQISCVSGKYGDAMQVSIPIFNPPTTRTTSVYGVIDDGAGVIQPIEMPQDSLPIFGSLGLDISSTILQNIHDAFLSVYNYPFERTENLASAAIGIASLYHIIGEQKSSRNLPPSKIVKSKIGKLFLDLRNRQNENGDFSTWPSYAGHSNLSFQKNDFESVHAIQAIATLIEYGYEIESSKMKQLVKNSIDWLDRYILVNLQSKDQFILATVSYALFTLYCIHSKKNKSSVTQLAMKFYQTHTYSILSLESLAWILGTLQGNDSSVVKKRDEIITYLMRNSFEENNCLYFNSYYDKLIRSQLFHSLERTTAIIARSLIQSRYNIDVVSKVIIGLMDRKENGTWKNIQTNCWVITAVAEFSSTFERSSPKCLSRGWLVNTSDSSNLKTTFCGQTPYFDGKSTISYSIEVPLSILYSKSDLENVKFNNIIKSDKQQVIEPSSNVDENSEKVETQPSSSTTSIISIPKSELWLQKEGKGKLYYRMNIKYATVDLSTEEHFNGLTIHRQYSPKSKSDKMEFDSETGVLKVSVGSKVLVTLNVQTEVDRYNLALVDKFAGGFDIVDKTDFRLEGTVWEFQNQRDERCEVFTNQMERGKYTYKYTLRASTRGEYLIPSACIEEMYDPDVFGRTNSLRVIIN.

Positions 12–46 form a coiled coil; sequence VHEVKKQELESILLQQEQEKQAKEEKESIKDTDDK. Disordered stretches follow at residues 23–101, 136–189, 1022–1054, and 2817–2839; these read ILLQ…IEKK, DIRE…RKET, ITTT…TTTT, and NNNN…RPTR. Over residues 28-62 the composition is skewed to basic and acidic residues; sequence EQEKQAKEEKESIKDTDDKPIEDTEHSTNNDKPIE. Residues 70 to 92 are compositionally biased toward low complexity; it reads TPTTTTTTKPTDEASSSSNNNNN. Positions 136-145 are enriched in basic and acidic residues; it reads DIREPTDKPF. The segment covering 146 to 156 has biased composition (polar residues); it reads ENTSNIETTRQ. A coiled-coil region spans residues 167-215; that stretch reads KTEAERLEQEQKQKQYDENRKETDRKLELELERLKNKKEEVEQIRAYFQ. Residues 168–189 are compositionally biased toward basic and acidic residues; the sequence is TEAERLEQEQKQKQYDENRKET. The span at 2817–2826 shows a compositional bias: low complexity; that stretch reads NNNNNNNRYN. Residues 2853–2857, 2913–2916, and 2976–2983 each bind GTP; these read DTAGQ, TKAD, and GDGGIGKS. Disordered regions lie at residues 3036–3086, 3107–3142, and 3733–3754; these read LQSA…LSSR, RKSS…QDYE, and VIEP…PSSS. Residues 3070 to 3086 show a composition bias toward low complexity; that stretch reads PSSSSTRTSVSTSLSSR. A compositionally biased stretch (basic and acidic residues) spans 3107–3120; it reads RKSSLVEEESKRQY. Positions 3121–3141 are enriched in acidic residues; sequence DDDDESKSESSEYDDDDDQDY.

The protein belongs to the small GTPase superfamily. CpRas family.

The protein is Circularly permutated Ras protein 2 (cpras2) of Dictyostelium discoideum (Social amoeba).